We begin with the raw amino-acid sequence, 292 residues long: MHKFWPRHSPNFMACRVAVRTVQPRDITVGLSGGADSLALVAALCAEDYNVHALCVDHGLQPGSHEVAQQAAHHARTFGAHAEIISVTVAPGNLEANARTARYQALHSRNLPVVVGHTADDQAETLLLGALRGKATGMQIHTDNLWRPLLGVRRATTLAACTELGIEPWHDPHNANTDFLRVALRTQVVPLLSDIIGGDAVPALSQAATLIAEDTHALHVDTPDDRIAQLAGMPPALRRRHLVALLQAYGARVSAAHLRAVDALITNWHGQKAVPVGNGLEVTRKDGRLSVS.

ATP is bound at residue 32-37 (SGGADS).

It belongs to the tRNA(Ile)-lysidine synthase family.

The protein localises to the cytoplasm. The enzyme catalyses cytidine(34) in tRNA(Ile2) + L-lysine + ATP = lysidine(34) in tRNA(Ile2) + AMP + diphosphate + H(+). Its function is as follows. Ligates lysine onto the cytidine present at position 34 of the AUA codon-specific tRNA(Ile) that contains the anticodon CAU, in an ATP-dependent manner. Cytidine is converted to lysidine, thus changing the amino acid specificity of the tRNA from methionine to isoleucine. In Corynebacterium diphtheriae (strain ATCC 700971 / NCTC 13129 / Biotype gravis), this protein is tRNA(Ile)-lysidine synthase.